The chain runs to 707 residues: 65-kDa microtubule-associated protein 3 (707 aa).

Coiled coils occupy residues 49-84 (LEVY…CSAM), 157-179 (NLSM…EKID), 269-289 (QQEY…ITEA), 354-374 (IVDA…IKEE), and 464-486 (LEEY…DQKK). The segment at 495–574 (QEALYGSKPS…PSRKQSMNPS (80 aa)) is disordered. Residues 500-512 (GSKPSPSKPLGGK) show a composition bias toward low complexity. Phosphoserine is present on residues Ser504 and Ser528.

This sequence belongs to the MAP65/ASE1 family. In terms of assembly, forms a dimer. Binds to microtubules (MT) during cell division. Bundles polymerized MT via the formation of 25-nm crossbridges with centrally located endocytic MT, and midline phragmoplast MT. As to expression, expressed in all tissues enriched in dividing cells, such as the root and shoot apical meristem, foliar primordia, and young leaves, and embryos.

Its subcellular location is the nucleus. It is found in the cytoplasm. The protein localises to the cytoskeleton. It localises to the phragmoplast. Microtubule-associated protein that plays a critical role in organizing the mitotic microtubule array during both early and late mitosis in all plant organs. Essential for the cytokinesis, especially in roots, by maintaining the integrity of the overlapped microtubules in the phragmoplast. Required during root morphogenesis. Needed for giant cell development during root knot nematode infection, where cytokinesis is initiated but not completed. The chain is 65-kDa microtubule-associated protein 3 (MAP65-3) from Arabidopsis thaliana (Mouse-ear cress).